A 292-amino-acid polypeptide reads, in one-letter code: Aspartate carbamoyltransferase catalytic subunit (292 aa).

2 residues coordinate carbamoyl phosphate: R50 and T51. Residue K78 participates in L-aspartate binding. Positions 100, 128, and 131 each coordinate carbamoyl phosphate. R161 and R211 together coordinate L-aspartate. Residues G250 and P251 each contribute to the carbamoyl phosphate site.

This sequence belongs to the aspartate/ornithine carbamoyltransferase superfamily. ATCase family. As to quaternary structure, heterododecamer (2C3:3R2) of six catalytic PyrB chains organized as two trimers (C3), and six regulatory PyrI chains organized as three dimers (R2).

The catalysed reaction is carbamoyl phosphate + L-aspartate = N-carbamoyl-L-aspartate + phosphate + H(+). Its pathway is pyrimidine metabolism; UMP biosynthesis via de novo pathway; (S)-dihydroorotate from bicarbonate: step 2/3. In terms of biological role, catalyzes the condensation of carbamoyl phosphate and aspartate to form carbamoyl aspartate and inorganic phosphate, the committed step in the de novo pyrimidine nucleotide biosynthesis pathway. This chain is Aspartate carbamoyltransferase catalytic subunit, found in Nitratiruptor sp. (strain SB155-2).